Here is a 413-residue protein sequence, read N- to C-terminus: MGLKNFLEKIEHHFEAGGKLEKYYPLYEAAATIFYTQGKVTPGASHVRDAIDLKRMMILVWFAVFPAMFWGMYNVGYQAIPALNQLYSGAELQQVIAGDWHYRLAQMLGASLTPDAGWASKMLLGAAYFLPIYAVVFLVGGFWEVVFSIVRKHEINEGFFVTSILFSLIVPPTLPLWQAALGISFGVVIGKEIFGGTGRNFLNPALAGRAFLFFAYPAQISGDLVWTSADGFSGATPLSQWSVNGSHSLVNTVSGQPITWMDAFLGYIPGSIGEVSTLMILIGGAIIIFGRVASWRIVAGVMIGMIATAYLFNWIGSTTNPLFAMPWYWHLVLGGFAFGMIFMATDPVSASFTNKGKWWYGGLIGVMCILIRVANPAYPEGMMLAILFANLFAPLFDYVVVQANIKRRKARGE.

3 helical membrane-spanning segments follow: residues Met-56–Gly-76, Leu-123–Trp-143, and Ile-169–Ile-189. Thr-236 bears the FMN phosphoryl threonine mark. 5 consecutive transmembrane segments (helical) span residues Gly-270–Gly-290, Ile-297–Ser-317, Leu-322–Phe-342, Trp-358–Tyr-378, and Gly-381–Val-401.

It belongs to the NqrB/RnfD family. As to quaternary structure, composed of six subunits; NqrA, NqrB, NqrC, NqrD, NqrE and NqrF. The cofactor is FMN.

It localises to the cell inner membrane. It carries out the reaction a ubiquinone + n Na(+)(in) + NADH + H(+) = a ubiquinol + n Na(+)(out) + NAD(+). NQR complex catalyzes the reduction of ubiquinone-1 to ubiquinol by two successive reactions, coupled with the transport of Na(+) ions from the cytoplasm to the periplasm. NqrA to NqrE are probably involved in the second step, the conversion of ubisemiquinone to ubiquinol. This chain is Na(+)-translocating NADH-quinone reductase subunit B, found in Yersinia pestis.